Here is a 686-residue protein sequence, read N- to C-terminus: UvrABC system protein C (686 aa).

Basic and acidic residues predominate over residues 1–14 (MVHDSTDDPDDTRV). The tract at residues 1 to 48 (MVHDSTDDPDDTRVRKSRRGTALDAPPQETAPPDLDPATTGGDDEDDA) is disordered. One can recognise a GIY-YIG domain in the interval 81–160 (TSPGVYRMLN…IKQLRPRFNV (80 aa)). The UVR domain maps to 270-305 (HAVKQELAGEMEKAANELEFETAALYRDRLAALSAI).

The protein belongs to the UvrC family. As to quaternary structure, interacts with UvrB in an incision complex.

It localises to the cytoplasm. The UvrABC repair system catalyzes the recognition and processing of DNA lesions. UvrC both incises the 5' and 3' sides of the lesion. The N-terminal half is responsible for the 3' incision and the C-terminal half is responsible for the 5' incision. The protein is UvrABC system protein C of Bradyrhizobium diazoefficiens (strain JCM 10833 / BCRC 13528 / IAM 13628 / NBRC 14792 / USDA 110).